We begin with the raw amino-acid sequence, 661 residues long: 3-hydroxypropionyl-coenzyme A synthetase (661 aa).

The active site involves D526. K617 carries the N6-acetyllysine modification.

Belongs to the ATP-dependent AMP-binding enzyme family. In terms of assembly, homotetramer.

It carries out the reaction 3-hydroxypropanoate + ATP + CoA = 3-hydroxypropanoyl-CoA + AMP + diphosphate. Plays a role in the autotrophic CO(2) fixation pathway. Activates 3-hydroxypropionate to its CoA ester. Can also activate propionate, and to a lesser extent acrylate, acetate and butyrate. The sequence is that of 3-hydroxypropionyl-coenzyme A synthetase from Metallosphaera sedula (strain ATCC 51363 / DSM 5348 / JCM 9185 / NBRC 15509 / TH2).